A 78-amino-acid chain; its full sequence is ATP synthase subunit c (78 aa).

A run of 2 helical transmembrane segments spans residues F11 to V31 and L53 to L73.

Belongs to the ATPase C chain family. F-type ATPases have 2 components, F(1) - the catalytic core - and F(0) - the membrane proton channel. F(1) has five subunits: alpha(3), beta(3), gamma(1), delta(1), epsilon(1). F(0) has four main subunits: a(1), b(1), b'(1) and c(10-14). The alpha and beta chains form an alternating ring which encloses part of the gamma chain. F(1) is attached to F(0) by a central stalk formed by the gamma and epsilon chains, while a peripheral stalk is formed by the delta, b and b' chains.

The protein resides in the cell inner membrane. Functionally, f(1)F(0) ATP synthase produces ATP from ADP in the presence of a proton or sodium gradient. F-type ATPases consist of two structural domains, F(1) containing the extramembraneous catalytic core and F(0) containing the membrane proton channel, linked together by a central stalk and a peripheral stalk. During catalysis, ATP synthesis in the catalytic domain of F(1) is coupled via a rotary mechanism of the central stalk subunits to proton translocation. Its function is as follows. Key component of the F(0) channel; it plays a direct role in translocation across the membrane. A homomeric c-ring of between 10-14 subunits forms the central stalk rotor element with the F(1) delta and epsilon subunits. The protein is ATP synthase subunit c of Cereibacter sphaeroides (strain ATCC 17025 / ATH 2.4.3) (Rhodobacter sphaeroides).